We begin with the raw amino-acid sequence, 185 residues long: UPF0397 protein CPR_1556 (185 aa).

5 consecutive transmembrane segments (helical) span residues 11 to 31, 44 to 64, 71 to 91, 111 to 131, and 149 to 169; these read IVAI…GSLP, AFLS…IGFI, IVFF…VGLI, IFMF…LVAP, and GVIG…VLIS.

The protein belongs to the UPF0397 family.

The protein resides in the cell membrane. The polypeptide is UPF0397 protein CPR_1556 (Clostridium perfringens (strain SM101 / Type A)).